Reading from the N-terminus, the 365-residue chain is Transcription factor KUA1 (365 aa).

Positions 1-21 (MTRRCSHCNHNGHNSRTCPNR) are disordered. The segment at 3–20 (RRCSHCNHNGHNSRTCPN) adopts a CCHC-type zinc-finger fold. Residues 8 to 18 (CNHNGHNSRTC) show a composition bias toward polar residues. The R/KLFGV (transcriptional repression) signature appears at 24 to 28 (KLFGV). The interval 41–99 (MGNLSHYTGSGSGGHGTGSNTPGSPGDVPDHVAGDGYASEDFVAGSSSSRERKKGTPWT) is disordered. In terms of domain architecture, HTH myb-type spans 90–146 (RERKKGTPWTEEEHRMFLLGLQKLGKGDWRGISRNYVTTRTPTQVASHAQKYFIRQS). The segment at residues 118–142 (WRGISRNYVTTRTPTQVASHAQKYF) is a DNA-binding region (H-T-H motif). Disordered stretches follow at residues 214 to 254 (SMDS…QPQL) and 321 to 365 (ESNK…IHAL). Residues 220-254 (STTGEPTATAAAASSSSRLEETTQLQSQLQPQPQL) show a composition bias toward low complexity. The span at 343-355 (RQSAFHPNPSSDS) shows a compositional bias: polar residues.

As to expression, expressed ubiquitously, except in hypocotyls, root tips and lateral root primordia.

It localises to the nucleus. Functionally, transcriptional repressor. Direct regulator of the transcription of peroxidase (Prxs) and reactive oxygen species (ROS)-related genes via the recognition of 5'-ATCACA-3' motif. Binds to 5'-TATCCA-3' motif (TA box) and represses the activity of corresponding promoters (e.g. sugar response genes). Regulates hypocotyl elongation in response to darkness by enhancing auxin accumulation in a phytochrome-interacting factor (PIF) proteins-dependent manner. Promotes lateral roots formation. Promotes cell expansion during leaves development via the modulation of cell wall-located Prxs. Plays a critical role in developmentally regulated and dark-induced onset of leaf senescence by repressing the transcription of several genes involved in chloroplast function and responses to light and auxin. Promotes responses to auxin, abscisic acid (ABA), and ethylene. The polypeptide is Transcription factor KUA1 (Arabidopsis thaliana (Mouse-ear cress)).